Consider the following 111-residue polypeptide: Universal stress protein B (111 aa).

Helical transmembrane passes span 1-21 (MISTVALFWALFLVCVINMAR) and 90-110 (FILTSALCGLVIISLIGLMIW).

The protein belongs to the universal stress protein B family.

The protein resides in the cell inner membrane. The protein is Universal stress protein B of Cronobacter sakazakii (strain ATCC BAA-894) (Enterobacter sakazakii).